Here is a 158-residue protein sequence, read N- to C-terminus: 2-C-methyl-D-erythritol 2,4-cyclodiphosphate synthase (158 aa).

A divalent metal cation-binding residues include Asp8 and His10. Residues 8–10 (DSH) and 34–35 (HS) each bind 4-CDP-2-C-methyl-D-erythritol 2-phosphate. Residue His42 participates in a divalent metal cation binding. 4-CDP-2-C-methyl-D-erythritol 2-phosphate-binding positions include 56–58 (DIG), 61–65 (FPDND), and Arg142.

The protein belongs to the IspF family. Homotrimer. Requires a divalent metal cation as cofactor.

It carries out the reaction 4-CDP-2-C-methyl-D-erythritol 2-phosphate = 2-C-methyl-D-erythritol 2,4-cyclic diphosphate + CMP. The protein operates within isoprenoid biosynthesis; isopentenyl diphosphate biosynthesis via DXP pathway; isopentenyl diphosphate from 1-deoxy-D-xylulose 5-phosphate: step 4/6. In terms of biological role, involved in the biosynthesis of isopentenyl diphosphate (IPP) and dimethylallyl diphosphate (DMAPP), two major building blocks of isoprenoid compounds. Catalyzes the conversion of 4-diphosphocytidyl-2-C-methyl-D-erythritol 2-phosphate (CDP-ME2P) to 2-C-methyl-D-erythritol 2,4-cyclodiphosphate (ME-CPP) with a corresponding release of cytidine 5-monophosphate (CMP). The polypeptide is 2-C-methyl-D-erythritol 2,4-cyclodiphosphate synthase (Brachyspira hyodysenteriae (strain ATCC 49526 / WA1)).